Reading from the N-terminus, the 131-residue chain is uncharacterized protein (131 aa).

The next 2 helical transmembrane spans lie at 68-88 (VVRA…VAPI) and 94-114 (VLGA…IVAI).

It is found in the cell membrane. This is an uncharacterized protein from Methanocaldococcus jannaschii (strain ATCC 43067 / DSM 2661 / JAL-1 / JCM 10045 / NBRC 100440) (Methanococcus jannaschii).